The following is a 263-amino-acid chain: Chymotrypsinogen B (263 aa).

Positions 1 to 18 (MAFLWLVSCFALVGATFG) are cleaved as a signal peptide. Disulfide bonds link C19/C140, C60/C76, C154/C219, C186/C200, and C209/C238. In terms of domain architecture, Peptidase S1 spans 34-261 (IVNGEDAIPG…LMPWVQQILE (228 aa)). Catalysis depends on H75, which acts as the Charge relay system. Residue S93 is modified to Phosphoserine. D120 (charge relay system) is an active-site residue. The active-site Charge relay system is S213.

The protein belongs to the peptidase S1 family.

It is found in the secreted. It localises to the extracellular space. The enzyme catalyses Preferential cleavage: Tyr-|-Xaa, Trp-|-Xaa, Phe-|-Xaa, Leu-|-Xaa.. The chain is Chymotrypsinogen B (Ctrb1) from Rattus norvegicus (Rat).